We begin with the raw amino-acid sequence, 431 residues long: Beta-lactamase hydrolase-like protein (431 aa).

Positions 212, 214, and 286 each coordinate Zn(2+). Asp309 provides a ligand contact to substrate.

This sequence belongs to the metallo-beta-lactamase superfamily. The cofactor is Zn(2+).

Functionally, could play a role in cell adherence or biofilm development. The polypeptide is Beta-lactamase hydrolase-like protein (Agrobacterium fabrum (strain C58 / ATCC 33970) (Agrobacterium tumefaciens (strain C58))).